Here is a 315-residue protein sequence, read N- to C-terminus: Dihydroorotate dehydrogenase (fumarate) (315 aa).

Substrate is bound by residues Lys46, Asn70–Leu74, and Asn130. Lys46–Ser47 contributes to the FMN binding site. Position 130 (Asn130) interacts with FMN. Residue Cys133 is the Nucleophile of the active site. Residues Lys167 and Ile195 each contribute to the FMN site. Asn196–Ser197 is a substrate binding site. Residues Gly224, Gly252 to Gly253, and Gly274 to Thr275 each bind FMN.

Belongs to the dihydroorotate dehydrogenase family. Type 1 subfamily. Homodimer. Requires FMN as cofactor.

The protein resides in the cytoplasm. The enzyme catalyses (S)-dihydroorotate + fumarate = orotate + succinate. Its pathway is pyrimidine metabolism; UMP biosynthesis via de novo pathway. Functionally, catalyzes the conversion of dihydroorotate to orotate with fumarate as the electron acceptor. The chain is Dihydroorotate dehydrogenase (fumarate) (URA1) from Kluyveromyces lactis (strain ATCC 8585 / CBS 2359 / DSM 70799 / NBRC 1267 / NRRL Y-1140 / WM37) (Yeast).